Reading from the N-terminus, the 442-residue chain is 3-phosphoshikimate 1-carboxyvinyltransferase (442 aa).

Residues Lys-25, Ser-26, and Arg-30 each coordinate 3-phosphoshikimate. Phosphoenolpyruvate is bound at residue Lys-25. Positions 97 and 125 each coordinate phosphoenolpyruvate. Residues Ser-170, Ser-171, Gln-172, Asp-323, and Lys-350 each coordinate 3-phosphoshikimate. Gln-172 contacts phosphoenolpyruvate. Asp-323 serves as the catalytic Proton acceptor. Residues Arg-354 and Arg-399 each coordinate phosphoenolpyruvate.

This sequence belongs to the EPSP synthase family. In terms of assembly, monomer.

The protein localises to the cytoplasm. It carries out the reaction 3-phosphoshikimate + phosphoenolpyruvate = 5-O-(1-carboxyvinyl)-3-phosphoshikimate + phosphate. It functions in the pathway metabolic intermediate biosynthesis; chorismate biosynthesis; chorismate from D-erythrose 4-phosphate and phosphoenolpyruvate: step 6/7. Functionally, catalyzes the transfer of the enolpyruvyl moiety of phosphoenolpyruvate (PEP) to the 5-hydroxyl of shikimate-3-phosphate (S3P) to produce enolpyruvyl shikimate-3-phosphate and inorganic phosphate. In Bartonella tribocorum (strain CIP 105476 / IBS 506), this protein is 3-phosphoshikimate 1-carboxyvinyltransferase.